We begin with the raw amino-acid sequence, 73 residues long: Translation initiation factor IF-1 (73 aa).

One can recognise an S1-like domain in the interval 1 to 73 (MSEKEAGIEV…TRGRITYRDK (73 aa)).

It belongs to the IF-1 family. As to quaternary structure, component of the 30S ribosomal translation pre-initiation complex which assembles on the 30S ribosome in the order IF-2 and IF-3, IF-1 and N-formylmethionyl-tRNA(fMet); mRNA recruitment can occur at any time during PIC assembly.

The protein localises to the cytoplasm. In terms of biological role, one of the essential components for the initiation of protein synthesis. Stabilizes the binding of IF-2 and IF-3 on the 30S subunit to which N-formylmethionyl-tRNA(fMet) subsequently binds. Helps modulate mRNA selection, yielding the 30S pre-initiation complex (PIC). Upon addition of the 50S ribosomal subunit IF-1, IF-2 and IF-3 are released leaving the mature 70S translation initiation complex. This chain is Translation initiation factor IF-1, found in Anaeromyxobacter sp. (strain Fw109-5).